A 176-amino-acid chain; its full sequence is Inorganic pyrophosphatase (176 aa).

Residues lysine 31, arginine 45, and tyrosine 57 each contribute to the substrate site. Aspartate 67, aspartate 72, and aspartate 104 together coordinate Mg(2+). Position 141 (tyrosine 141) interacts with substrate.

The protein belongs to the PPase family. In terms of assembly, homohexamer. The cofactor is Mg(2+).

Its subcellular location is the cytoplasm. The enzyme catalyses diphosphate + H2O = 2 phosphate + H(+). Functionally, catalyzes the hydrolysis of inorganic pyrophosphate (PPi) forming two phosphate ions. This chain is Inorganic pyrophosphatase, found in Methanopyrus kandleri (strain AV19 / DSM 6324 / JCM 9639 / NBRC 100938).